Consider the following 514-residue polypeptide: Cholesterol side-chain cleavage enzyme, mitochondrial (514 aa).

Residues 1–39 (SFRLSLSASTYAQRGSFTTPEHDFTLFPHRNHSVTSESR) constitute a mitochondrion transit peptide. Cys461 contacts heme.

It belongs to the cytochrome P450 family. It depends on heme as a cofactor.

The protein localises to the mitochondrion inner membrane. It catalyses the reaction 6 reduced [adrenodoxin] + cholesterol + 3 O2 + 6 H(+) = 4-methylpentanal + pregnenolone + 6 oxidized [adrenodoxin] + 4 H2O. It participates in lipid metabolism; C21-steroid hormone metabolism. In terms of biological role, catalyzes the side-chain cleavage reaction of cholesterol to pregnenolone, the precursor of most steroid hormones. The protein is Cholesterol side-chain cleavage enzyme, mitochondrial (CYP11A1) of Hypanus americanus (Southern stingray).